Consider the following 77-residue polypeptide: Acyl carrier protein (77 aa).

Positions 1 to 76 constitute a Carrier domain; that stretch reads MENFDKVKDI…DAVNFINNLE (76 aa). Position 36 is an O-(pantetheine 4'-phosphoryl)serine (Ser-36).

The protein belongs to the acyl carrier protein (ACP) family. In terms of processing, 4'-phosphopantetheine is transferred from CoA to a specific serine of apo-ACP by AcpS. This modification is essential for activity because fatty acids are bound in thioester linkage to the sulfhydryl of the prosthetic group.

It localises to the cytoplasm. It functions in the pathway lipid metabolism; fatty acid biosynthesis. Carrier of the growing fatty acid chain in fatty acid biosynthesis. The protein is Acyl carrier protein of Staphylococcus carnosus (strain TM300).